Reading from the N-terminus, the 135-residue chain is MAGRVGQMKNQDEVHQNQILRELFLKELRAQKLYTQYHVNPLRKVHTITRKPMSWHDNLEEPEDAKFLNLIHHAAQGPKKKYSETQTEAQEIGWDPNPLINPDRQDHRLNHFRVYHDITLYKAKLWSLGEDDHQK.

A disordered region spans residues 76–100 (QGPKKKYSETQTEAQEIGWDPNPLI).

This sequence belongs to the CFAP144 family. Microtubule inner protein component of sperm flagellar doublet microtubules. As to expression, predominantly expressed in tissues containing motile cilia.

The protein localises to the cytoplasm. It localises to the cytoskeleton. It is found in the cilium axoneme. The protein resides in the flagellum axoneme. This chain is Cilia- and flagella-associated protein 144, found in Mus musculus (Mouse).